Here is a 55-residue protein sequence, read N- to C-terminus: Hirustasin (55 aa).

5 cysteine pairs are disulfide-bonded: C6–C17, C11–C22, C24–C44, C29–C48, and C33–C50. Residues 24–50 (CNEVHCRIRCKYGLKKDENGCEYPCSC) form the Antistasin-like domain.

This sequence belongs to the protease inhibitor I15 (antistasin) family.

It is found in the secreted. Functionally, acts as an inhibitor of tissue kallikrein, trypsin, chymotrypsin and neutrophil cathepsin G. In Hirudo medicinalis (Medicinal leech), this protein is Hirustasin.